Reading from the N-terminus, the 357-residue chain is DNA replication and repair protein RecF (357 aa).

Residue 31–38 coordinates ATP; it reads GQNGAGKT.

The protein belongs to the RecF family.

It localises to the cytoplasm. Functionally, the RecF protein is involved in DNA metabolism; it is required for DNA replication and normal SOS inducibility. RecF binds preferentially to single-stranded, linear DNA. It also seems to bind ATP. The polypeptide is DNA replication and repair protein RecF (Coxiella burnetii (strain CbuK_Q154) (Coxiella burnetii (strain Q154))).